Here is a 297-residue protein sequence, read N- to C-terminus: Malonyl-[acyl-carrier protein] O-methyltransferase (297 aa).

It belongs to the methyltransferase superfamily.

It catalyses the reaction malonyl-[ACP] + S-adenosyl-L-methionine = malonyl-[ACP] methyl ester + S-adenosyl-L-homocysteine. It functions in the pathway cofactor biosynthesis; biotin biosynthesis. Converts the free carboxyl group of a malonyl-thioester to its methyl ester by transfer of a methyl group from S-adenosyl-L-methionine (SAM). It allows to synthesize pimeloyl-ACP via the fatty acid synthetic pathway. The polypeptide is Malonyl-[acyl-carrier protein] O-methyltransferase (Laribacter hongkongensis (strain HLHK9)).